Here is a 636-residue protein sequence, read N- to C-terminus: LEAF RUST 10 DISEASE-RESISTANCE LOCUS RECEPTOR-LIKE PROTEIN KINASE-like 1.5 (636 aa).

Positions 1–26 (MSQPPWRCFSLLIFVLTIFSTKPSSA) are cleaved as a signal peptide. At 27–257 (STSCSSSFHC…NNKRVNHIAV (231 aa)) the chain is on the extracellular side. N-linked (GlcNAc...) asparagine glycans are attached at residues Asn73, Asn102, Asn146, and Asn224. Residues 258–278 (LSLIFALTCLLLVFSVAVAIF) traverse the membrane as a helical segment. At 279–636 (RSRRASFLSS…RVADDDVAKN (358 aa)) the chain is on the cytoplasmic side. A Protein kinase domain is found at 324–628 (FDPKRKIGDG…LRRIRSHTRV (305 aa)). ATP contacts are provided by residues 330–338 (IGDGGFGSV) and Lys352. The Proton acceptor role is filled by Asp458.

The protein belongs to the protein kinase superfamily. Ser/Thr protein kinase family.

The protein resides in the cell membrane. It catalyses the reaction L-seryl-[protein] + ATP = O-phospho-L-seryl-[protein] + ADP + H(+). The enzyme catalyses L-threonyl-[protein] + ATP = O-phospho-L-threonyl-[protein] + ADP + H(+). The sequence is that of LEAF RUST 10 DISEASE-RESISTANCE LOCUS RECEPTOR-LIKE PROTEIN KINASE-like 1.5 from Arabidopsis thaliana (Mouse-ear cress).